The primary structure comprises 127 residues: Aspartate 1-decarboxylase (127 aa).

The active-site Schiff-base intermediate with substrate; via pyruvic acid is the serine 25. Pyruvic acid (Ser) is present on serine 25. Threonine 57 contacts substrate. Tyrosine 58 (proton donor) is an active-site residue. 73 to 75 (GAA) lines the substrate pocket.

The protein belongs to the PanD family. Heterooctamer of four alpha and four beta subunits. It depends on pyruvate as a cofactor. Post-translationally, is synthesized initially as an inactive proenzyme, which is activated by self-cleavage at a specific serine bond to produce a beta-subunit with a hydroxyl group at its C-terminus and an alpha-subunit with a pyruvoyl group at its N-terminus.

The protein resides in the cytoplasm. It carries out the reaction L-aspartate + H(+) = beta-alanine + CO2. It functions in the pathway cofactor biosynthesis; (R)-pantothenate biosynthesis; beta-alanine from L-aspartate: step 1/1. Its function is as follows. Catalyzes the pyruvoyl-dependent decarboxylation of aspartate to produce beta-alanine. The sequence is that of Aspartate 1-decarboxylase from Clostridium botulinum (strain ATCC 19397 / Type A).